The sequence spans 1302 residues: Zinc finger protein 536 (1302 aa).

The disordered stretch occupies residues 1–26; the sequence is MEEASLCLGVSSTAPEAEPHLSGPVL. 7 consecutive C2H2-type zinc fingers follow at residues 130 to 152, 158 to 180, 274 to 297, 300 to 323, 345 to 367, 373 to 395, and 631 to 653; these read YPCP…MRTH, FKCP…LRTH, FRCT…RILH, YKCT…EKAH, FRCE…MRKH, HCCQ…MKVH, and TECP…SRVH. The interval 650 to 736 is disordered; it reads SRVHKRDRKS…IGEEAGRAGG (87 aa). A compositionally biased stretch (basic and acidic residues) spans 657–676; sequence RKSDEDALHVGVGLEERRGS. Residues 677–698 are compositionally biased toward polar residues; sequence GSDQESQSVSRSTTPGSSNVTE. 2 consecutive C2H2-type zinc fingers follow at residues 753–775 and 781–803; these read KDCP…LRIH and YKCP…LERH. Disordered stretches follow at residues 804–832, 855–897, 935–988, and 1133–1261; these read HRER…SKAP, GPAS…SKSS, KDTK…APTL, and NKNT…GLEK. 2 positions are modified to phosphoserine: serine 828 and serine 829. The segment covering 869-883 has biased composition (polar residues); that stretch reads GDHSGQATGMPSELS. The span at 935-973 shows a compositional bias: basic and acidic residues; the sequence is KDTKDKVPSDAHPMKAHTAEGGEEKASMKPSQRKSEKSQ. Acidic residues-rich tracts occupy residues 1161-1171 and 1179-1188; these read DLSDIASSEDM and NEDEELDTEP. Over residues 1198-1212 the composition is skewed to low complexity; that stretch reads LSKDGSSEGGDSLLS.

It belongs to the krueppel C2H2-type zinc-finger protein family. Expressed predominantly in the brain, while a weak signal is also detected in the heart and testis. Expression is abundant in neuronal cells of the cerebral cortex, hippocampus and hypothalamic area (at protein level).

The protein localises to the nucleus. In terms of biological role, transcriptional repressor that negatively regulates neuron differentiation by repressing retinoic acid-induced gene transcription. Binds and interrupts RARA from binding to retinoic acid response elements (RARE) composed of tandem 5'-AGGTCA-3' sites known as DR1-DR5. Recognizes and binds 2 copies of the core DNA sequence 5'-CCCCCA-3'. This Mus musculus (Mouse) protein is Zinc finger protein 536 (Znf536).